The sequence spans 765 residues: 5-methyltetrahydropteroyltriglutamate--homocysteine methyltransferase 2 (765 aa).

Positions 18 and 116 each coordinate 5-methyltetrahydropteroyltri-L-glutamate. Residues 437 to 439 (IGS) and E490 contribute to the L-homocysteine site. Residues 437–439 (IGS) and E490 each bind L-methionine. 5-methyltetrahydropteroyltri-L-glutamate contacts are provided by residues D495, Y518, 521-522 (RC), and W567. D605 is a binding site for L-homocysteine. D605 contributes to the L-methionine binding site. Residues H647, C649, H658, D662, and E671 each coordinate Zn(2+). H701 acts as the Proton donor in catalysis. A Zn(2+)-binding site is contributed by C733.

This sequence belongs to the vitamin-B12 independent methionine synthase family. It depends on Zn(2+) as a cofactor. As to expression, expressed in leaves, stems and siliques.

The protein localises to the cytoplasm. The protein resides in the cytosol. It catalyses the reaction 5-methyltetrahydropteroyltri-L-glutamate + L-homocysteine = tetrahydropteroyltri-L-glutamate + L-methionine. The protein operates within amino-acid biosynthesis; L-methionine biosynthesis via de novo pathway; L-methionine from L-homocysteine (MetE route): step 1/1. Catalyzes the transfer of a methyl group from 5-methyltetrahydrofolate to homocysteine resulting in methionine formation. This chain is 5-methyltetrahydropteroyltriglutamate--homocysteine methyltransferase 2 (MS2), found in Arabidopsis thaliana (Mouse-ear cress).